We begin with the raw amino-acid sequence, 720 residues long: Cyclopenase penL (720 aa).

The Cu cation site is built by His-137, His-141, and His-313.

It belongs to the tyrosinase family. The cofactor is Cu(2+).

The catalysed reaction is (-)-cyclopenine = viridicatin + methyl isocyanate + H(+). It carries out the reaction (-)-4'-methoxycyclopenine = 4'-methoxyviridicatin + methyl isocyanate + H(+). Its pathway is secondary metabolite biosynthesis. The protein operates within alkaloid biosynthesis. It functions in the pathway mycotoxin biosynthesis. Cyclopenase; part of the gene cluster that mediates the biosynthesis of penigequinolones, potent insecticidal alkaloids that contain a highly modified 10-carbon prenyl group. The first stage is catalyzed by the nonribosomal peptide synthetase penN that condenses anthranilic acid and O-methyl-L-tyrosine to produce 4'-methoxycyclopeptin. 4'-methoxycyclopeptin is then converted to 4'-methoxydehydrocyclopeptin by the ketoglutarate-dependent dioxygenase penM through dehydrogenation to form a double bond between C-alpha and C-beta of the O-methyltyrosine side chain. PenM also converts its first product methoxydehydrocyclopeptin to 4'-methoxycyclopenin. The following conversion of 4'methoxycyclopenin into 4'-methoxyviridicatin is catalyzed by the cyclopenase penL. 4'-methoxyviridicatin is the precursor of quinolone natural products, and is further converted to quinolinone B. The prenyltransferase penI then catalyzes the canonical Friedel-Crafts alkylation of quinolinone B with dimethylallyl cation to yield dimethylallyl quinolone, which is subjected to FAD-dependent dehydrogenation by the FAD-linked oxidoreductase penH to yield conjugated aryl diene. The delta(3') double bond then serves as the site of the second alkylation with DMAPP catalyzed by the prenyltransferase penG to yield a carbenium ion intermediate, which can be attacked by H(2)O to yield a styrenyl quinolone containing a C3'-hydroxyprenyl chain, or undergo cyclization to yield yaequinolones J1 and J2. The conversion of the styrenyl quinolone into the tetrahydrofuran-containing yaequinolone C is performed by the FAD-dependent monooxygenase penE and involves epoxidation of the terminal C7'-C8' olefin, followed by epoxide ring opening initiated by the C3' hydroxyl group. The predicted cysteine hydrolase penJ acts as an epoxide hydrolase that enhances the rate of the 5-exo-tet cyclization step, increasing the yield of yaequinolone C. PenF catalyzes the cationic rearrangement of the epoxide formed by penE (before ring opening to produce yaequinolone C) into yaequinolone D. Finally, the short-chain dehydrogenase/reductase (SDR)-like reductase penD, catalyzes both the dehydration of yaequinolone D and the reduction of the resulting oxonium to yield penigequinolone. This is Cyclopenase penL from Penicillium thymicola.